The sequence spans 263 residues: uncharacterized protein (263 aa).

Residues 53–89 (SAVTASKFSPDGRWLVNLTDQGYVQLWDVHKGERVKT) form a WD repeat.

This is an uncharacterized protein from Deinococcus radiodurans (strain ATCC 13939 / DSM 20539 / JCM 16871 / CCUG 27074 / LMG 4051 / NBRC 15346 / NCIMB 9279 / VKM B-1422 / R1).